Consider the following 475-residue polypeptide: Ubiquitin carboxyl-terminal hydrolase calypso (475 aa).

A UCH catalytic domain is found at 44 to 275; the sequence is GWLELESDPG…IRFNLMAVVP (232 aa). The active-site Nucleophile is cysteine 130. Histidine 212 (proton donor) is an active-site residue. The stretch at 333–360 forms a coiled coil; it reads AKDLQLLLKNLDTEIAINEQNLADENDR. Residues 374-402 form the ULD domain; the sequence is NYDKFICTFLSMLAHQGVLGELVSQHLLP. The positively charged C-terminal tail required for binding nucleosomes stretch occupies residues 404 to 475; the sequence is KKVSGQSAAN…KGRNKCRKRK (72 aa). Positions 411–475 are disordered; it reads AANRISKQNS…KGRNKCRKRK (65 aa). Residues 419-460 show a composition bias toward low complexity; it reads NSAASSAGANAGAAAGVTPKSQQQQQQPQTAASKNGKSPGKT. Basic residues predominate over residues 461–475; it reads PGRRRKGRNKCRKRK.

It belongs to the peptidase C12 family. BAP1 subfamily. As to quaternary structure, catalytic component of the polycomb repressive deubiquitinase (PR-DUB) complex, at least composed of caly/calypso, Asx and sba (MBD5/6 homolog). The PR-DUB complex associates with nucleosomes to mediate deubiquitination of histone H2AK118ub1 substrates; the association requires the positively charged C-terminal tail of caly, probably due to direct binding of DNA. Interacts (via ULD domain) with Asx (via DEUBAD domain); the interaction produces a stable heterodimer with a composite binding site for ubiquitin. Homodimerizes (via coiled-coil hinge-region between the UCH and ULD domains) to mediate assembly of 2 copies of the caly-Asx heterodimer into a bisymmetric tetramer; dimerization enhances PR-DUB association with nucleosomes.

Its subcellular location is the nucleus. It catalyses the reaction Thiol-dependent hydrolysis of ester, thioester, amide, peptide and isopeptide bonds formed by the C-terminal Gly of ubiquitin (a 76-residue protein attached to proteins as an intracellular targeting signal).. Its function is as follows. Catalytic component of the polycomb repressive deubiquitinase (PR-DUB) complex, a complex that specifically mediates deubiquitination of histone H2A monoubiquitinated at 'Lys-119' (H2AK118ub1). Mediates bisymmetric organization of the PR-DUB complex and is involved in association with nucleosomes to mediate deubiquitination. Does not deubiquitinate monoubiquitinated histone H2B. Required to maintain the transcriptionally repressive state of homeotic genes throughout development. The PR-DUB complex has weak or no activity toward 'Lys-48'- and 'Lys-63'-linked polyubiquitin chains. Polycomb group (PcG) protein. The sequence is that of Ubiquitin carboxyl-terminal hydrolase calypso from Drosophila persimilis (Fruit fly).